A 307-amino-acid chain; its full sequence is Ribosomal RNA small subunit methyltransferase H (307 aa).

S-adenosyl-L-methionine-binding positions include 33 to 35 (GGY), Asp51, Phe82, Asp96, and Gln103.

Belongs to the methyltransferase superfamily. RsmH family.

It localises to the cytoplasm. The catalysed reaction is cytidine(1402) in 16S rRNA + S-adenosyl-L-methionine = N(4)-methylcytidine(1402) in 16S rRNA + S-adenosyl-L-homocysteine + H(+). Specifically methylates the N4 position of cytidine in position 1402 (C1402) of 16S rRNA. The protein is Ribosomal RNA small subunit methyltransferase H of Rickettsia peacockii (strain Rustic).